The following is a 348-amino-acid chain: NADH-quinone oxidoreductase subunit H (348 aa).

The next 8 helical transmembrane spans lie at 10 to 30 (LPFL…LVLV), 82 to 102 (GVFL…WAVI), 115 to 135 (VGLL…IMGG), 161 to 181 (IGFV…TTIV), 199 to 219 (FLDW…ISAL), 251 to 271 (LFFL…TILF), 287 to 307 (IPGV…FAIV), and 322 to 342 (LGWK…AAFL).

Belongs to the complex I subunit 1 family. NDH-1 is composed of 14 different subunits. Subunits NuoA, H, J, K, L, M, N constitute the membrane sector of the complex.

It localises to the cell inner membrane. It catalyses the reaction a quinone + NADH + 5 H(+)(in) = a quinol + NAD(+) + 4 H(+)(out). Functionally, NDH-1 shuttles electrons from NADH, via FMN and iron-sulfur (Fe-S) centers, to quinones in the respiratory chain. The immediate electron acceptor for the enzyme in this species is believed to be ubiquinone. Couples the redox reaction to proton translocation (for every two electrons transferred, four hydrogen ions are translocated across the cytoplasmic membrane), and thus conserves the redox energy in a proton gradient. This subunit may bind ubiquinone. This Bartonella tribocorum (strain CIP 105476 / IBS 506) protein is NADH-quinone oxidoreductase subunit H.